A 3023-amino-acid chain; its full sequence is Genome polyprotein (3023 aa).

Positions 1–21 are enriched in basic residues; it reads MSTLPKPKRQTKRNTLRRPKN. Residue Ser2 is modified to N-acetylserine; by host. The interaction with STAT1 stretch occupies residues 2-23; the sequence is STLPKPKRQTKRNTLRRPKNVK. The tract at residues 2–58 is interaction with EIF2AK2/PKR; it reads STLPKPKRQTKRNTLRRPKNVKFPAGGQIVGEVYVLPRRGPQLGVREVRKTSERSQP. The interaction with DDX3X stretch occupies residues 2–59; the sequence is STLPKPKRQTKRNTLRRPKNVKFPAGGQIVGEVYVLPRRGPQLGVREVRKTSERSQPR. The interval 2 to 75 is disordered; it reads STLPKPKRQT…PKARPREGRS (74 aa). The Cytoplasmic portion of the chain corresponds to 2-168; it reads STLPKPKRQT…EDGVNYATGN (167 aa). 2 short sequence motifs (nuclear localization signal) span residues 5–13 and 38–43; these read PKPKRQTKR and PRRGPQ. A compositionally biased stretch (basic and acidic residues) spans 47-57; it reads REVRKTSERSQ. Residue Ser53 is modified to Phosphoserine; by host. 2 consecutive short sequence motifs (nuclear localization signal) follow at residues 58–64 and 66–71; these read PRGRRQP and PKARPR. Positions 112–152 are important for endoplasmic reticulum and mitochondrial localization; it reads PRRRSRNLGKVIDTLTCGFADLMGYIPLIGAPVGGVARALA. Residue Ser116 is modified to Phosphoserine; by host. An interaction with APOA2 region spans residues 122-173; that stretch reads VIDTLTCGFADLMGYIPLIGAPVGGVARALAHGVRALEDGVNYATGNLPGCS. Residues 164 to 167 are important for lipid droplets localization; the sequence is YATG. A helical transmembrane segment spans residues 169–189; sequence LPGCSFSIFLLALFSCLTCPA. Residues 178-191 constitute a propeptide, ER anchor for the core protein, removed in mature form by host signal peptidase; that stretch reads LLALFSCLTCPASS. Residues 190 to 359 lie on the Lumenal side of the membrane; it reads SSLEYRNASG…VGAHWGVMAG (170 aa). Residues Asn196, Asn209, and Asn235 are each glycosylated (N-linked (GlcNAc...) asparagine; by host). Residues 266–297 are important for fusion; sequence LVAPPTLCSALYVEDAFGAVSLVGQAFTFRPR. Asn306 carries an N-linked (GlcNAc...) asparagine; by host glycan. A helical membrane pass occupies residues 360-380; that stretch reads LAYFSMQGNWAKVVIVLIMFS. Residues 381–733 lie on the Lumenal side of the membrane; sequence GVDATTHTTG…WEFVVLVFLL (353 aa). The interval 386-413 is HVR1; sequence THTTGGSAAQATAGFTSFFTRGPSQNLQ. N-linked (GlcNAc...) (high mannose) asparagine; by host glycosylation is found at Asn418, Asn424, and Asn431. Cystine bridges form between Cys430–Cys554, Cys453–Cys460, Cys488–Cys496, and Cys505–Cys510. A glycan (N-linked (GlcNAc...) asparagine; by host) is linked at Asn449. The interval 476–480 is HVR2; it reads ANING. A glycan (N-linked (GlcNAc...) asparagine; by host) is linked at Asn477. The interval 482–495 is CD81-binding 1; that stretch reads SEDRPYCWHYPPRP. N-linked (GlcNAc...) asparagine; by host glycosylation occurs at Asn534. The CD81-binding 2 stretch occupies residues 546 to 553; the sequence is PPQGRWFG. Asn558 carries N-linked (GlcNAc...) asparagine; by host glycosylation. Intrachain disulfides connect Cys566–Cys571, Cys589–Cys593, Cys605–Cys628, and Cys615–Cys652. N-linked (GlcNAc...) (high mannose) asparagine; by host glycosylation is found at Asn631 and Asn653. Cys660 and Cys685 are disulfide-bonded. A PKR/eIF2-alpha phosphorylation homology domain (PePHD) region spans residues 668 to 679; it reads SEQQPLLHSTTD. Residues 734 to 754 traverse the membrane as a helical segment; the sequence is LADARVCVALWMMLLISQAEA. Over 755–765 the chain is Lumenal; it reads AMENLVMLNAL. Residues 766 to 786 form a helical membrane-spanning segment; that stretch reads SAAGQQGYVWYLVAFCAAWHI. The Cytoplasmic portion of the chain corresponds to 787 to 790; that stretch reads RGKL. Residues 791–811 traverse the membrane as a helical segment; that stretch reads VPLITYGLTGLWPLALLDLLL. The Lumenal segment spans residues 812–821; that stretch reads PQRAYAWTGE. The helical transmembrane segment at 822–842 threads the bilayer; the sequence is DDATIGAGVLLLLGFFTLSPW. Residues 843-889 are Cytoplasmic-facing; that stretch reads YKHWIGRLIWWNQYAICRGEAALQVWVPPLLVRGSRDSVILLASLLY. The helical transmembrane segment at 890–910 threads the bilayer; that stretch reads PSLIFDITKLLIAVLGPLYLI. Residues 907–1034 enclose the Peptidase C18 domain; that stretch reads LYLIQAALTS…DYKKMGWRLL (128 aa). Residues 911–936 lie on the Lumenal side of the membrane; that stretch reads QAALTSTPYFVRAHVLIRICMLVRSA. A protease NS2-3 region spans residues 912 to 1214; the sequence is AALTSTPYFV…PVETLSTQVR (303 aa). Residue Cys930 is the site of S-palmitoyl cysteine; by host attachment. The chain crosses the membrane as a helical span at residues 937–957; the sequence is MGGKYVQMAVLTVGRWFNTYL. Positions 937–957 are interaction with host SCPS1; it reads MGGKYVQMAVLTVGRWFNTYL. The Cytoplasmic segment spans residues 958–1665; that stretch reads YDHLSPIQDW…CMSADLEVTT (708 aa). Active-site for protease NS2 activity; shared with dimeric partner residues include His960, Glu980, and Cys1001. A Peptidase S29 domain is found at 1035–1216; that stretch reads SPISAYAQQT…ETLSTQVRSP (182 aa). Active-site charge relay system; for serine protease NS3 activity residues include His1091 and Asp1115. 2 residues coordinate Zn(2+): Cys1131 and Cys1133. Ser1173 serves as the catalytic Charge relay system; for serine protease NS3 activity. Positions 1179 and 1183 each coordinate Zn(2+). Residues 1225–1377 form the Helicase ATP-binding domain; sequence PAVPESYQVG…PNIEEVGLTS (153 aa). An ATP-binding site is contributed by 1238-1245; the sequence is APTGSGKS. 2 residues coordinate Mg(2+): Ser1245 and Glu1325. Positions 1324 to 1327 match the DECH box motif; the sequence is DECH. The 160-residue stretch at 1387–1546 folds into the Helicase C-terminal domain; that stretch reads ALPLAMIKGG…DLQPAETTVR (160 aa). The segment at 1494 to 1506 is RNA-binding; the sequence is QRRGRTGRGRPGI. A helical membrane pass occupies residues 1666 to 1686; it reads SAWVLVGGVLAALAAYCLSVG. Positions 1687-1698 are NS3-binding; that stretch reads CVVIVGHIELGG. At 1687–1813 the chain is on the cytoplasmic side; it reads CVVIVGHIEL…SVTSPLTTNQ (127 aa). The chain crosses the membrane as a helical span at residues 1814–1834; it reads TMFFNILGGWVATHLAGPAAS. At 1835-1836 the chain is on the lumenal side; that stretch reads SA. The helical transmembrane segment at 1837 to 1857 threads the bilayer; the sequence is FVVSGLAGAAVGGIGIGRVLL. Position 1858 (Asp1858) is a topological domain, cytoplasmic. A helical membrane pass occupies residues 1859–1879; sequence VLAGYGAGVSGALVAFKIMGG. At 1880–1889 the chain is on the lumenal side; it reads ELPTTEDMVN. Residues 1890–1910 form a helical membrane-spanning segment; sequence LLPAILSPGALVVGVICAAVL. At 1911-1980 the chain is on the cytoplasmic side; that stretch reads RRHVGPGEGA…WINEDYPSPC (70 aa). Cys1980 is lipidated: S-palmitoyl cysteine; by host. The stretch at 1981–2010 is an intramembrane region; it reads NGDWLHDIWDWVCIVLSDFKTWLSAKIMPK. Topologically, residues 2011-3002 are cytoplasmic; the sequence is VPGIPFLSCQ…YHSVSRARTR (992 aa). Residues Cys2019, Cys2037, Cys2039, and Cys2060 each contribute to the Zn(2+) site. Positions 2128–2216 are FKBP8-binding; that stretch reads EFFTELDGVR…ASSSASQLSA (89 aa). Positions 2128–2340 are transcriptional activation; sequence EFFTELDGVR…PVPPPRRKRT (213 aa). The tract at residues 2143–2147 is interaction with non-structural protein 4A; that stretch reads PPCKP. A compositionally biased stretch (low complexity) spans 2195–2218; sequence ARRLARGSPPSEASSSASQLSAPS. Positions 2195–2226 are disordered; the sequence is ARRLARGSPPSEASSSASQLSAPSLKATCQTH. An interaction with host SKP2 region spans residues 2197-2450; it reads RLARGSPPSE…AIITPCSAEE (254 aa). 6 positions are modified to phosphoserine; by host: Ser2202, Ser2205, Ser2209, Ser2212, Ser2215, and Ser2218. The segment at 2218 to 2257 is ISDR; sequence SLKATCQTHRPHPDAELIDANLLWRQEMGSNITRVESETK. The interval 2218–2283 is interaction with EIF2AK2/PKR; sequence SLKATCQTHR…TELSIPAECF (66 aa). Residues 2257–2314 form an NS4B-binding region; sequence KVVILDSFEPLRAEEDDTELSIPAECFKKPPKYPPALPIWARPDYNPPLLPSWKDPTY. Residues 2307–2385 form a V3 region; it reads PSWKDPTYEP…GTESTAESGD (79 aa). 2 disordered regions span residues 2320–2344 and 2357–2422; these read HGCALPPTRPAPVPPPRRKRTIKLD and ERSF…STVS. Positions 2330–2333 match the SH3-binding motif; it reads APVP. Residues 2335–2343 carry the Nuclear localization signal motif; that stretch reads PRRKRTIKL. Positions 2366-2384 are enriched in low complexity; the sequence is EGTGTSSSGVGTESTAESG. Phosphoserine; by host occurs at positions 2461 and 2474. The RdRp catalytic domain occupies 2646-2764; the sequence is PLGFSYDTRC…ISESCGVEED (119 aa). Mg(2+) is bound by residues Asp2652, Asp2750, and Asp2751. A helical membrane pass occupies residues 3003-3023; it reads HLLLCLLLLTVGVGIFLLPAR.

It belongs to the hepacivirus polyprotein family. Homooligomer. Interacts with E1 (via C-terminus). Interacts with the non-structural protein 5A. Interacts (via N-terminus) with host STAT1 (via SH2 domain); this interaction results in decreased STAT1 phosphorylation and ubiquitin-mediated proteasome-dependent STAT1 degradation, leading to decreased IFN-stimulated gene transcription. Interacts with host STAT3; this interaction constitutively activates STAT3. Interacts with host LTBR receptor. Interacts with host TNFRSF1A receptor and possibly induces apoptosis. Interacts with host HNRPK. Interacts with host YWHAE. Interacts with host UBE3A/E6AP. Interacts with host DDX3X. Interacts with host APOA2. Interacts with host RXRA protein. Interacts with host SP110 isoform 3/Sp110b; this interaction sequesters the transcriptional corepressor SP110 away from the nucleus. Interacts with host CREB3 nuclear transcription protein; this interaction triggers cell transformation. Interacts with host ACY3. Interacts with host C1QR1. Interacts with host RBM24; this interaction, which enhances the interaction of the mature core protein with 5'-UTR, may inhibit viral translation and favor replication. Interacts with host EIF2AK2/PKR; this interaction induces the autophosphorylation of EIF2AK2. Part of the viral assembly initiation complex composed of NS2, E1, E2, NS3, NS4A, NS5A and the mature core protein. In terms of assembly, forms a heterodimer with envelope glycoprotein E2. Interacts with mature core protein. Interacts with protease NS2. The heterodimer E1/E2 interacts with host CLDN1; this interaction plays a role in viral entry into host cell. Interacts with host SPSB2 (via C-terminus). Part of the viral assembly initiation complex composed of NS2, E1, E2, NS3, NS4A, NS5A and the mature core protein. Interacts with host NEURL3; this interaction prevents E1 binding to glycoprotein E2. As to quaternary structure, forms a heterodimer with envelope glycoprotein E1. Interacts with host CD81 and SCARB1 receptors; these interactions play a role in viral entry into host cell. Interacts with host EIF2AK2/PKR; this interaction inhibits EIF2AK2 and probably allows the virus to evade the innate immune response. Interacts with host CD209/DC-SIGN and CLEC4M/DC-SIGNR. Interact with host SPCS1; this interaction is essential for viral particle assembly. Interacts with protease NS2. The heterodimer E1/E2 interacts with host CLDN1; this interaction plays a role in viral entry into host cell. Part of the viral assembly initiation complex composed of NS2, E1, E2, NS3, NS4A, NS5A and the mature core protein. Interacts with host SLC3A2/4F2hc; the interaction may facilitate viral entry into host cell. Interacts with human PLSCR1. Homohexamer. Homoheptamer. Interacts with protease NS2. In terms of assembly, homodimer. Interacts with host SPCS1; this interaction is essential for viral particle assembly. Interacts with envelope glycoprotein E1. Interacts with envelope glycoprotein E2. Interacts with viroporin p7. Interacts with serine protease/helicase NS3. Part of the replication complex composed of NS2, NS3, NS4A, NS4B, NS5A and the RNA-directed RNA polymerase embedded in an ER-derived membranous web. Part of the viral assembly initiation complex composed of NS2, E1, E2, NS3, NS4A, NS5A and the mature core protein. As to quaternary structure, interacts with protease NS2. Interacts with non-structural protein 4A; this interaction stabilizes the folding of NS3 serine protease. NS3-NS4A interaction is essential for NS3 activation and allows membrane anchorage of the latter. NS3/NS4A complex also prevents phosphorylation of host IRF3, thus preventing the establishment of dsRNA induced antiviral state. Interacts with host MAVS; this interaction leads to the cleavage and inhibition of host MAVS. Interacts with host TICAM1; this interaction leads to the cleavage and inhibition of host TICAM1. Interacts with host TANK-binding kinase/TBK1; this interaction results in the inhibition of the association between TBK1 and IRF3, which leads to the inhibition of IRF3 activation. Interacts with host RBM24. Part of the replication complex composed of NS2, NS3, NS4A, NS4B, NS5A and the RNA-directed RNA polymerase embedded in an ER-derived membranous web. Part of the viral assembly initiation complex composed of NS2, E1, E2, NS3, NS4A, NS5A and the mature core protein. Interacts with NS3 serine protease; this interaction stabilizes the folding of NS3 serine protease. NS3-NS4A interaction is essential for NS3 activation and allows membrane anchorage of the latter. Interacts with non-structural protein 5A (via N-terminus). Part of the replication complex composed of NS2, NS3, NS4A, NS4B, NS5A and the RNA-directed RNA polymerase embedded in an ER-derived membranous web. Part of the viral assembly initiation complex composed of NS2, E1, E2, NS3, NS4A, NS5A and the mature core protein. In terms of assembly, homomultimer. Interacts with non-structural protein NS5A. Interacts with host PLA2G4C; this interaction likely initiates the recruitment of replication complexes to lipid droplets. Interacts with host STING; this interaction disrupts the interaction between STING and TBK1 thereby suppressing the interferon signaling. Part of the replication complex composed of NS2, NS3, NS4A, NS4B, NS5A and the RNA-directed RNA polymerase embedded in an ER-derived membranous web. As to quaternary structure, monomer. Homodimer; dimerization is required for RNA-binding. Interacts with the mature core protein. Interacts (via N-terminus) with non-structural protein 4A. Interacts with non-structural protein 4B. Interacts (via region D2) with RNA-directed RNA polymerase. Part of the viral assembly initiation complex composed of NS2, E1, E2, NS3, NS4A, NS5A and the mature core protein. Part of the replication complex composed of NS2, NS3, NS4A, NS4B, NS5A and the RNA-directed RNA polymerase embedded in an ER-derived membranous web. Interacts with host GRB2. Interacts with host BIN1. Interacts with host PIK3R1. Interacts with host SRCAP. Interacts with host FKBP8. Interacts (via C-terminus) with host VAPB (via MSP domain). Interacts with host EIF2AK2/PKR; this interaction leads to disruption of EIF2AK2 dimerization by NS5A and probably allows the virus to evade the innate immune response. Interacts (via N-terminus) with host PACSIN2 (via N-terminus); this interaction attenuates protein kinase C alpha-mediated phosphorylation of PACSIN2 by disrupting the interaction between PACSIN2 and PRKCA. Interacts (via N-terminus) with host SRC kinase (via SH2 domain). Interacts with most Src-family kinases. Interacts with host IFI27 and SKP2; promotes the ubiquitin-mediated proteasomal degradation of NS5A. Interacts with host GPS2. Interacts with host TNFRSF21; this interaction allows the modulation by the virus of JNK, p38 MAPK, STAT3, and Akt signaling pathways in a DR6-dependent manner. Interacts (via N-terminus) with host CIDEB (via N-terminus); this interaction seems to regulate the association of HCV particles with APOE. Interacts with host CHKA/Choline Kinase-alpha; CHKA bridges host PI4KA and NS5A and potentiates NS5A-stimulated PI4KA activity, which then facilitates the targeting of the ternary complex to the ER for viral replication. Interacts with host SPSB2 (via C-terminus); this interaction targets NS5A for ubiquitination and degradation. Interacts with host RAB18; this interaction may promote the association of NS5A and other replicase components with lipid droplets. Interacts (via region D2) with host PPIA/CYPA; the interaction stimulates RNA-binding ability of NS5A and is dependent on the peptidyl-prolyl cis-trans isomerase activity of PPIA/CYPA. Interacts with host TRIM14; this interaction induces the degradation of NS5A. Homooligomer. Interacts with non-structural protein 5A. Interacts with host VAPB. Interacts with host PRK2/PKN2. Interacts with host HNRNPA1 and SEPT6; these interactions facilitate viral replication. Part of the replication complex composed of NS2, NS3, NS4A, NS4B, NS5A and the RNA-directed RNA polymerase. The cofactor is Zn(2+). Mg(2+) is required as a cofactor. Specific enzymatic cleavages in vivo yield mature proteins. The structural proteins, core, E1, E2 and p7 are produced by proteolytic processing by host signal peptidases. The core protein precursor is synthesized as a 23 kDa, which is retained in the ER membrane through the hydrophobic signal peptide. Cleavage by the signal peptidase releases the 21 kDa mature core protein. The cleavage of the core protein precursor occurs between aminoacids 176 and 188 but the exact cleavage site is not known. Some degraded forms of the core protein appear as well during the course of infection. The other proteins (p7, NS2, NS3, NS4A, NS4B, NS5A and NS5B) are cleaved by the viral proteases. Autoprocessing between NS2 and NS3 is mediated by the NS2 cysteine protease catalytic domain and regulated by the NS3 N-terminal domain. Post-translationally, phosphorylated by host PKC and PKA. In terms of processing, ubiquitinated; mediated by UBE3A and leading to core protein subsequent proteasomal degradation. Highly N-glycosylated. Post-translationally, palmitoylation is required for NS2/3 autoprocessing and E2 recruitment to membranes. In terms of processing, palmitoylated. This modification may play a role in its polymerization or in protein-protein interactions. Phosphorylated on serines in a basal form termed p56. p58 is a hyperphosphorylated form of p56. p56 and p58 coexist in the cell in roughly equivalent amounts. Hyperphosphorylation is dependent on the presence of NS4A. Host CSNK1A1/CKI-alpha or RPS6KB1 kinases may be responsible for NS5A phosphorylation. Post-translationally, tyrosine phosphorylation is essential for the interaction with host SRC. In terms of processing, the N-terminus is phosphorylated by host PRK2/PKN2.

Its subcellular location is the host endoplasmic reticulum membrane. It localises to the host mitochondrion membrane. The protein localises to the virion. It is found in the host cytoplasm. The protein resides in the host nucleus. Its subcellular location is the host lipid droplet. It localises to the virion membrane. The protein localises to the host mitochondrion. It is found in the host cell membrane. The protein resides in the host perinuclear region. It catalyses the reaction Hydrolysis of four peptide bonds in the viral precursor polyprotein, commonly with Asp or Glu in the P6 position, Cys or Thr in P1 and Ser or Ala in P1'.. The catalysed reaction is a ribonucleoside 5'-triphosphate + H2O = a ribonucleoside 5'-diphosphate + phosphate + H(+). The enzyme catalyses ATP + H2O = ADP + phosphate + H(+). It carries out the reaction RNA(n) + a ribonucleoside 5'-triphosphate = RNA(n+1) + diphosphate. With respect to regulation, inhibited by the antiviral drug hexamethylene amiloride. Inhibition by amantadine appears to be genotype-dependent. Also inhibited by long-alkyl-chain iminosugar derivatives. Activity is up-regulated by PRK2/PKN2-mediated phosphorylation. Functionally, packages viral RNA to form a viral nucleocapsid, and promotes virion budding. Participates in the viral particle production as a result of its interaction with the non-structural protein 5A. Binds RNA and may function as a RNA chaperone to induce the RNA structural rearrangements taking place during virus replication. Modulates viral translation initiation by interacting with viral IRES and 40S ribosomal subunit. Affects various cell signaling pathways, host immunity and lipid metabolism. Prevents the establishment of cellular antiviral state by blocking the interferon-alpha/beta (IFN-alpha/beta) and IFN-gamma signaling pathways and by blocking the formation of phosphorylated STAT1 and promoting ubiquitin-mediated proteasome-dependent degradation of STAT1. Activates STAT3 leading to cellular transformation. Regulates the activity of cellular genes, including c-myc and c-fos. May repress the promoter of p53, and sequester CREB3 and SP110 isoform 3/Sp110b in the cytoplasm. Represses cell cycle negative regulating factor CDKN1A, thereby interrupting an important check point of normal cell cycle regulation. Targets transcription factors involved in the regulation of inflammatory responses and in the immune response: suppresses TNF-induced NF-kappa-B activation, and activates AP-1. Binds to dendritic cells (DCs) via C1QR1, resulting in down-regulation of T-lymphocytes proliferation. Alters lipid metabolism by interacting with hepatocellular proteins involved in lipid accumulation and storage. Induces up-regulation of FAS promoter activity, and thereby contributes to the increased triglyceride accumulation in hepatocytes (steatosis). Forms a heterodimer with envelope glycoprotein E2, which mediates virus attachment to the host cell, virion internalization through clathrin-dependent endocytosis and fusion with host membrane. Fusion with the host cell is most likely mediated by both E1 and E2, through conformational rearrangements of the heterodimer required for fusion rather than a classical class II fusion mechanism. E1/E2 heterodimer binds host apolipoproteins such as APOB and ApoE thereby forming a lipo-viro-particle (LVP). APOE associated to the LVP allows the initial virus attachment to cell surface receptors such as the heparan sulfate proteoglycans (HSPGs), syndecan-1 (SDC1), syndecan-1 (SDC2), the low-density lipoprotein receptor (LDLR) and scavenger receptor class B type I (SCARB1). The cholesterol transfer activity of SCARB1 allows E2 exposure and binding of E2 to SCARB1 and the tetraspanin CD81. E1/E2 heterodimer binding on CD81 activates the epithelial growth factor receptor (EGFR) signaling pathway. Diffusion of the complex E1-E2-EGFR-SCARB1-CD81 to the cell lateral membrane allows further interaction with Claudin 1 (CLDN1) and occludin (OCLN) to finally trigger HCV entry. Its function is as follows. Forms a heterodimer with envelope glycoprotein E1, which mediates virus attachment to the host cell, virion internalization through clathrin-dependent endocytosis and fusion with host membrane. Fusion with the host cell is most likely mediated by both E1 and E2, through conformational rearrangements of the heterodimer required for fusion rather than a classical class II fusion mechanism. The interaction between envelope glycoprotein E2 and host apolipoprotein E/APOE allows the proper assembly, maturation and infectivity of the viral particles. This interaction is probably promoted via the up-regulation of cellular autophagy by the virus. E1/E2 heterodimer binds host apolipoproteins such as APOB and APOE thereby forming a lipo-viro-particle (LVP). APOE associated to the LVP allows the initial virus attachment to cell surface receptors such as the heparan sulfate proteoglycans (HSPGs), syndecan-1 (SDC1), syndecan-1 (SDC2), the low-density lipoprotein receptor (LDLR) and scavenger receptor class B type I (SCARB1). The cholesterol transfer activity of SCARB1 allows E2 exposure and binding of E2 to SCARB1 and the tetraspanin CD81. E1/E2 heterodimer binding on CD81 activates the epithelial growth factor receptor (EGFR) signaling pathway. Diffusion of the complex E1-E2-EGFR-SCARB1-CD81 to the cell lateral membrane allows further interaction with Claudin 1 (CLDN1) and occludin (OCLN) to finally trigger HCV entry. Inhibits host EIF2AK2/PKR activation, preventing the establishment of an antiviral state. Viral ligand for CD209/DC-SIGN and CLEC4M/DC-SIGNR, which are respectively found on dendritic cells (DCs), and on liver sinusoidal endothelial cells and macrophage-like cells of lymph node sinuses. These interactions allow the capture of circulating HCV particles by these cells and subsequent facilitated transmission to permissive cells such as hepatocytes and lymphocyte subpopulations. The interaction between E2 and host amino acid transporter complex formed by SLC3A2 and SLC7A5/LAT1 may facilitate viral entry into host cell. In terms of biological role, ion channel protein that acts as a viroporin and plays an essential role in the assembly, envelopment and secretion of viral particles. Regulates the host cell secretory pathway, which induces the intracellular retention of viral glycoproteins and favors assembly of viral particles. Creates a pore in acidic organelles and releases Ca(2+) and H(+) in the cytoplasm of infected cells, leading to a productive viral infection. High levels of cytoplasmic Ca(2+) may trigger membrane trafficking and transport of viral ER-associated proteins to viroplasms, sites of viral genome replication. This ionic imbalance induces the assembly of the inflammasome complex, which triggers the maturation of pro-IL-1beta into IL-1beta through the action of caspase-1. Targets also host mitochondria and induces mitochondrial depolarization. In addition of its role as a viroporin, acts as a lipid raft adhesion factor. Functionally, cysteine protease required for the proteolytic auto-cleavage between the non-structural proteins NS2 and NS3. The N-terminus of NS3 is required for the function of NS2 protease (active region NS2-3). Promotes the initiation of viral particle assembly by mediating the interaction between structural and non-structural proteins. Displays three enzymatic activities: serine protease with a chymotrypsin-like fold, NTPase and RNA helicase. NS3 serine protease, in association with NS4A, is responsible for the cleavages of NS3-NS4A, NS4A-NS4B, NS4B-NS5A and NS5A-NS5B. The NS3/NS4A complex prevents phosphorylation of host IRF3, thus preventing the establishment of dsRNA induced antiviral state. The NS3/NS4A complex induces host amino acid transporter component SLC3A2, thus contributing to HCV propagation. NS3 RNA helicase binds to RNA and unwinds both dsDNA and dsRNA in the 3' to 5' direction, and likely resolves RNA complicated stable secondary structures in the template strand. Binds a single ATP and catalyzes the unzipping of a single base pair of dsRNA. Inhibits host antiviral proteins TBK1 and IRF3 thereby preventing the establishment of an antiviral state. Cleaves host MAVS/CARDIF thereby preventing the establishment of an antiviral state. Cleaves host TICAM1/TRIF, thereby disrupting TLR3 signaling and preventing the establishment of an antiviral state. Its function is as follows. Peptide cofactor which forms a non-covalent complex with the N-terminal of NS3 serine protease. The NS3/NS4A complex prevents phosphorylation of host IRF3, thus preventing the establishment of dsRNA induced antiviral state. The NS3/NS4A complex induces host amino acid transporter component SLC3A2, thus contributing to HCV propagation. In terms of biological role, induces a specific membrane alteration that serves as a scaffold for the virus replication complex. This membrane alteration gives rise to the so-called ER-derived membranous web that contains the replication complex. NS4B self-interaction contributes to its function in membranous web formation. Promotes host TRIF protein degradation in a CASP8-dependent manner thereby inhibiting host TLR3-mediated interferon signaling. Disrupts the interaction between STING and TBK1 contributing to the inhibition of interferon signaling. Functionally, phosphorylated protein that is indispensable for viral replication and assembly. Both hypo- and hyperphosphorylated states are required for the viral life cycle. The hyperphosphorylated form of NS5A is an inhibitor of viral replication. Involved in RNA-binding and especially in binding to the viral genome. Zinc is essential for RNA-binding. Participates in the viral particle production as a result of its interaction with the mature viral core protein. Its interaction with host VAPB may target the viral replication complex to vesicles. Down-regulates viral IRES translation initiation. Mediates interferon resistance, presumably by interacting with and inhibiting host EIF2AK2/PKR. Prevents BIN1-induced apoptosis. Acts as a transcriptional activator of some host genes important for viral replication when localized in the nucleus. Via the interaction with host PACSIN2, modulates lipid droplet formation in order to promote virion assembly. Modulates TNFRSF21/DR6 signaling pathway for viral propagation. RNA-dependent RNA polymerase that performs primer-template recognition and RNA synthesis during viral replication. Initiates RNA transcription/replication at a flavin adenine dinucleotide (FAD), resulting in a 5'- FAD cap on viral RNAs. In this way, recognition of viral 5' RNA by host pattern recognition receptors can be bypassed, thereby evading activation of antiviral pathways. The chain is Genome polyprotein from Homo sapiens (Human).